A 220-amino-acid chain; its full sequence is Ribonuclease P protein subunit p29 (220 aa).

The residue at position 10 (Ser10) is a Phosphoserine.

The protein belongs to the eukaryotic/archaeal RNase P protein component 1 family. In terms of assembly, component of nuclear RNase P and RNase MRP ribonucleoproteins. RNase P consists of a catalytic RNA moiety and 10 different protein chains; POP1, POP4, POP5, POP7, RPP14, RPP21, RPP25, RPP30, RPP38 and RPP40. Within the RNase P complex, POP1, POP7 and RPP25 form the 'finger' subcomplex, POP5, RPP14, RPP40 and homodimeric RPP30 form the 'palm' subcomplex, and RPP21, POP4 and RPP38 form the 'wrist' subcomplex. All subunits of the RNase P complex interact with the catalytic RNA. Several subunits of RNase P are also part of the RNase MRP complex. RNase MRP consists of a catalytic RNA moiety and about 8 protein subunits; POP1, POP7, RPP25, RPP30, RPP38, RPP40 and possibly also POP4 and POP5.

The protein localises to the nucleus. Its subcellular location is the nucleolus. Component of ribonuclease P, a ribonucleoprotein complex that generates mature tRNA molecules by cleaving their 5'-ends. The chain is Ribonuclease P protein subunit p29 (POP4) from Pongo abelii (Sumatran orangutan).